A 557-amino-acid polypeptide reads, in one-letter code: TGF-beta receptor type-2 (557 aa).

A signal peptide spans Met-1–Pro-23. Residues Ala-24–Lys-155 lie on the Extracellular side of the membrane. Intrachain disulfides connect Cys-41-Cys-74, Cys-44-Cys-61, Cys-51-Cys-57, Cys-67-Cys-91, Cys-111-Cys-126, and Cys-128-Cys-133. Asn-62 and Asn-84 each carry an N-linked (GlcNAc...) asparagine glycan. A helical transmembrane segment spans residues Val-156–Tyr-176. Over Ala-177–Lys-557 the chain is Cytoplasmic. The Protein kinase domain occupies Ile-234–Leu-537. Residues Val-240–Val-248 and Lys-267 each bind ATP. The active-site Proton acceptor is Asp-369.

The protein belongs to the protein kinase superfamily. TKL Ser/Thr protein kinase family. TGFB receptor subfamily. In terms of assembly, heterohexamer; TGFB1, TGFB2 and TGFB3 homodimeric ligands assemble a functional receptor composed of two TGFBR1 and TGFBR2 heterodimers to form a ligand-receptor heterohexamer. Requires Mg(2+) as cofactor. The cofactor is Mn(2+). Phosphorylated on a Ser/Thr residue in the cytoplasmic domain. As to expression, detected at low levels in embryonic heart, brain and lung. Detected at high levels in hatchling heart and lung.

It localises to the cell membrane. The protein resides in the membrane raft. The enzyme catalyses L-threonyl-[receptor-protein] + ATP = O-phospho-L-threonyl-[receptor-protein] + ADP + H(+). The catalysed reaction is L-seryl-[receptor-protein] + ATP = O-phospho-L-seryl-[receptor-protein] + ADP + H(+). In terms of biological role, transmembrane serine/threonine kinase forming with the TGF-beta type I serine/threonine kinase receptor, TGFBR1, the non-promiscuous receptor for the TGF-beta cytokines TGFB1, TGFB2 and TGFB3. Transduces the TGFB1, TGFB2 and TGFB3 signal from the cell surface to the cytoplasm and is thus regulating a plethora of physiological and pathological processes including cell cycle arrest in epithelial and hematopoietic cells, control of mesenchymal cell proliferation and differentiation, wound healing, extracellular matrix production, immunosuppression and carcinogenesis. The formation of the receptor complex composed of 2 TGFBR1 and 2 TGFBR2 molecules symmetrically bound to the cytokine dimer results in the phosphorylation and the activation of TGFRB1 by the constitutively active TGFBR2. Activated TGFBR1 phosphorylates SMAD2 which dissociates from the receptor and interacts with SMAD4. The SMAD2-SMAD4 complex is subsequently translocated to the nucleus where it modulates the transcription of the TGF-beta-regulated genes. This constitutes the canonical SMAD-dependent TGF-beta signaling cascade. Also involved in non-canonical, SMAD-independent TGF-beta signaling pathways. The polypeptide is TGF-beta receptor type-2 (TGFBR2) (Gallus gallus (Chicken)).